We begin with the raw amino-acid sequence, 143 residues long: uncharacterized protein (143 aa).

2 helical membrane passes run 16–36 (LIFA…IFVW) and 48–68 (ICYI…FIYV). N-linked (GlcNAc...) asparagine; by host glycosylation occurs at Asn71.

It is found in the membrane. This is an uncharacterized protein from Acanthamoeba polyphaga (Amoeba).